Reading from the N-terminus, the 257-residue chain is Imidazole glycerol phosphate synthase subunit HisF (257 aa).

Active-site residues include Asp-11 and Asp-130.

Belongs to the HisA/HisF family. In terms of assembly, heterodimer of HisH and HisF.

Its subcellular location is the cytoplasm. The enzyme catalyses 5-[(5-phospho-1-deoxy-D-ribulos-1-ylimino)methylamino]-1-(5-phospho-beta-D-ribosyl)imidazole-4-carboxamide + L-glutamine = D-erythro-1-(imidazol-4-yl)glycerol 3-phosphate + 5-amino-1-(5-phospho-beta-D-ribosyl)imidazole-4-carboxamide + L-glutamate + H(+). The protein operates within amino-acid biosynthesis; L-histidine biosynthesis; L-histidine from 5-phospho-alpha-D-ribose 1-diphosphate: step 5/9. In terms of biological role, IGPS catalyzes the conversion of PRFAR and glutamine to IGP, AICAR and glutamate. The HisF subunit catalyzes the cyclization activity that produces IGP and AICAR from PRFAR using the ammonia provided by the HisH subunit. The chain is Imidazole glycerol phosphate synthase subunit HisF from Shewanella sp. (strain W3-18-1).